The sequence spans 87 residues: Small ribosomal subunit protein uS17 (87 aa).

The protein belongs to the universal ribosomal protein uS17 family. As to quaternary structure, part of the 30S ribosomal subunit.

Its function is as follows. One of the primary rRNA binding proteins, it binds specifically to the 5'-end of 16S ribosomal RNA. The protein is Small ribosomal subunit protein uS17 of Oceanobacillus iheyensis (strain DSM 14371 / CIP 107618 / JCM 11309 / KCTC 3954 / HTE831).